Reading from the N-terminus, the 317-residue chain is MANLKEIRDRIKSVKNTRKITEAMRLVAAAKVRRAQEQVLRSRPFADRLARLLENLQARMRFEDADAPLLEQRAVQTITLMAVTGDRGLCGGYNSNIIKRTEKRFAELQRQGYKVALVLIGRKAISYFTNRNYPIQATFTGLEQVPTADEAGSIASEIFAEFLSETSDRVEIIFTKFINLVSCKPVVQTLLPLDPQGIAEADDEIFRLTTKEGRLSVEAGSAPENSQPALPSDIVFEQSPDQLLNALLPLYLQNQLLRSLQESAASELASRMTAMNNASDNAKELAKTLTLDYNKARQAAITQEILEVVGGSAAAGA.

It belongs to the ATPase gamma chain family. F-type ATPases have 2 components, CF(1) - the catalytic core - and CF(0) - the membrane proton channel. CF(1) has five subunits: alpha(3), beta(3), gamma(1), delta(1), epsilon(1). CF(0) has three main subunits: a, b and c.

It is found in the cellular thylakoid membrane. Its function is as follows. Produces ATP from ADP in the presence of a proton gradient across the membrane. The gamma chain is believed to be important in regulating ATPase activity and the flow of protons through the CF(0) complex. In Synechococcus sp. (strain CC9311), this protein is ATP synthase gamma chain.